Reading from the N-terminus, the 669-residue chain is L-type lectin-domain containing receptor kinase IV.4 (669 aa).

The first 23 residues, 1–23 (MFFIKLFTIFFLSFFWQSLKSSS), serve as a signal peptide directing secretion. Topologically, residues 24–294 (QIIDFTYNGF…TRVYRFYKNW (271 aa)) are extracellular. Residues 26-260 (IDFTYNGFRP…SEIFVLGWSF (235 aa)) are legume-lectin like. N-linked (GlcNAc...) asparagine glycans are attached at residues asparagine 58, asparagine 80, asparagine 127, asparagine 152, and asparagine 185. Residues 295–315 (VPLISLLLIPFLLIIFLVRFI) traverse the membrane as a helical segment. Over 316–669 (MKRRRKFAEE…VAYSLLSSGR (354 aa)) the chain is Cytoplasmic. One can recognise a Protein kinase domain in the interval 350-627 (FKDKNILGSG…LQYLRGDAML (278 aa)). ATP is bound by residues 356–364 (LGSGGFGSV) and lysine 379. Aspartate 475 acts as the Proton acceptor in catalysis.

It in the C-terminal section; belongs to the protein kinase superfamily. Ser/Thr protein kinase family. This sequence in the N-terminal section; belongs to the leguminous lectin family.

The protein localises to the cell membrane. The enzyme catalyses L-seryl-[protein] + ATP = O-phospho-L-seryl-[protein] + ADP + H(+). It carries out the reaction L-threonyl-[protein] + ATP = O-phospho-L-threonyl-[protein] + ADP + H(+). In terms of biological role, involved in resistance response to the pathogenic oomycetes Phytophthora infestans and Phytophthora capsici and to the pathogenic bacteria Pseudomonas syringae. This chain is L-type lectin-domain containing receptor kinase IV.4, found in Arabidopsis thaliana (Mouse-ear cress).